The primary structure comprises 258 residues: Ubiquinone/menaquinone biosynthesis C-methyltransferase UbiE (258 aa).

The disordered stretch occupies residues Met1 to Val21. S-adenosyl-L-methionine-binding positions include Thr81, Asp102, and Asn130–Ala131.

This sequence belongs to the class I-like SAM-binding methyltransferase superfamily. MenG/UbiE family.

The enzyme catalyses a 2-demethylmenaquinol + S-adenosyl-L-methionine = a menaquinol + S-adenosyl-L-homocysteine + H(+). It catalyses the reaction a 2-methoxy-6-(all-trans-polyprenyl)benzene-1,4-diol + S-adenosyl-L-methionine = a 5-methoxy-2-methyl-3-(all-trans-polyprenyl)benzene-1,4-diol + S-adenosyl-L-homocysteine + H(+). It participates in quinol/quinone metabolism; menaquinone biosynthesis; menaquinol from 1,4-dihydroxy-2-naphthoate: step 2/2. The protein operates within cofactor biosynthesis; ubiquinone biosynthesis. Methyltransferase required for the conversion of demethylmenaquinol (DMKH2) to menaquinol (MKH2) and the conversion of 2-polyprenyl-6-methoxy-1,4-benzoquinol (DDMQH2) to 2-polyprenyl-3-methyl-6-methoxy-1,4-benzoquinol (DMQH2). This Rhizobium leguminosarum bv. trifolii (strain WSM2304) protein is Ubiquinone/menaquinone biosynthesis C-methyltransferase UbiE.